Consider the following 258-residue polypeptide: UPF0246 protein YaaA (258 aa).

Belongs to the UPF0246 family.

This Shigella dysenteriae serotype 1 (strain Sd197) protein is UPF0246 protein YaaA.